Consider the following 221-residue polypeptide: Zingipain-1 (221 aa).

3 disulfide bridges follow: cysteine 24-cysteine 65, cysteine 58-cysteine 98, and cysteine 155-cysteine 206. Cysteine 27 is an active-site residue. N-linked (GlcNAc...) asparagine glycosylation is found at asparagine 95 and asparagine 156. Catalysis depends on residues histidine 161 and asparagine 181.

Belongs to the peptidase C1 family.

It carries out the reaction Preferential cleavage of peptides with a proline residue at the P2 position.. Functionally, cysteine proteinase with a high level of diversity in substrate specificity, an amino acid bearing a proline residue at the P2 position is preferred. This is Zingipain-1 from Zingiber officinale (Ginger).